A 208-amino-acid polypeptide reads, in one-letter code: Small ribosomal subunit protein uS2 (208 aa).

This sequence belongs to the universal ribosomal protein uS2 family.

This is Small ribosomal subunit protein uS2 from Cenarchaeum symbiosum (strain A).